A 193-amino-acid polypeptide reads, in one-letter code: ATP-dependent protease subunit HslV (193 aa).

The active site involves Thr-12. Residues Ala-167, Cys-170, and Thr-173 each contribute to the Na(+) site.

This sequence belongs to the peptidase T1B family. HslV subfamily. As to quaternary structure, a double ring-shaped homohexamer of HslV is capped on each side by a ring-shaped HslU homohexamer. The assembly of the HslU/HslV complex is dependent on binding of ATP.

It localises to the cytoplasm. It carries out the reaction ATP-dependent cleavage of peptide bonds with broad specificity.. Its activity is regulated as follows. Allosterically activated by HslU binding. Protease subunit of a proteasome-like degradation complex believed to be a general protein degrading machinery. The polypeptide is ATP-dependent protease subunit HslV (Bartonella henselae (strain ATCC 49882 / DSM 28221 / CCUG 30454 / Houston 1) (Rochalimaea henselae)).